A 448-amino-acid chain; its full sequence is Exodeoxyribonuclease 7 large subunit (448 aa).

It belongs to the XseA family. As to quaternary structure, heterooligomer composed of large and small subunits.

The protein resides in the cytoplasm. It catalyses the reaction Exonucleolytic cleavage in either 5'- to 3'- or 3'- to 5'-direction to yield nucleoside 5'-phosphates.. Bidirectionally degrades single-stranded DNA into large acid-insoluble oligonucleotides, which are then degraded further into small acid-soluble oligonucleotides. In Shewanella baltica (strain OS185), this protein is Exodeoxyribonuclease 7 large subunit.